The primary structure comprises 904 residues: Alpha-actinin-4 (904 aa).

The tract at residues 1 to 27 (MVDYHSAGQPYPYGGNGPGPNGDYMAQ) is disordered. The interval 1-259 (MVDYHSAGQP…IMTYVSSFYH (259 aa)) is actin-binding. 2 consecutive Calponin-homology (CH) domains span residues 43 to 147 (KQQR…LRFA) and 156 to 262 (TSAK…HAFS). 4 Spectrin repeats span residues 286 to 396 (HLME…WLLN), 406 to 511 (HLAE…ALEK), 521 to 632 (ELHL…ALQD), and 642 to 745 (RLRR…EVEN). 2 consecutive EF-hand domains span residues 758 to 793 (EQMQ…LGYD) and 799 to 834 (QGDA…ETTD). Residues Asp771, Asp773, Glu782, Asp812, Asn814, Ser816, and Ser818 each coordinate Ca(2+).

Belongs to the alpha-actinin family. As to quaternary structure, homodimer; antiparallel. Component of the CART complex. May interact with nuclear receptors.

It is found in the nucleus. The protein localises to the cytoplasm. Its subcellular location is the cell junction. The protein resides in the perinuclear region. In terms of biological role, F-actin cross-linking protein which is thought to anchor actin to a variety of intracellular structures. This is a bundling protein. Probably involved in vesicular trafficking via its association with the CART complex. Involved in tight junction assembly in epithelial cells. May also function as a transcriptional coactivator, stimulating transcription mediated by nuclear hormone receptors. The polypeptide is Alpha-actinin-4 (Gallus gallus (Chicken)).